The sequence spans 157 residues: Probable succinate transporter subunit YjjB (157 aa).

A run of 4 helical transmembrane segments spans residues 8 to 28 (FALA…AMVF), 50 to 70 (MILM…SMLV), 87 to 107 (VFTV…TAMI), and 129 to 149 (FLTA…PGLW).

It belongs to the ThrE exporter (TC 2.A.79) family. The transporter is composed of YjjB and YjjP.

It localises to the cell inner membrane. Its function is as follows. Involved in succinate export with YjjP. Both proteins are required for export. The chain is Probable succinate transporter subunit YjjB from Escherichia coli (strain SE11).